We begin with the raw amino-acid sequence, 192 residues long: Transcription antitermination protein NusB (192 aa).

The protein belongs to the NusB family.

Functionally, involved in transcription antitermination. Required for transcription of ribosomal RNA (rRNA) genes. Binds specifically to the boxA antiterminator sequence of the ribosomal RNA (rrn) operons. In Lactococcus lactis subsp. lactis (strain IL1403) (Streptococcus lactis), this protein is Transcription antitermination protein NusB.